The chain runs to 200 residues: 3-isopropylmalate dehydratase small subunit (200 aa).

The protein belongs to the LeuD family. LeuD type 1 subfamily. In terms of assembly, heterodimer of LeuC and LeuD.

The enzyme catalyses (2R,3S)-3-isopropylmalate = (2S)-2-isopropylmalate. Its pathway is amino-acid biosynthesis; L-leucine biosynthesis; L-leucine from 3-methyl-2-oxobutanoate: step 2/4. Functionally, catalyzes the isomerization between 2-isopropylmalate and 3-isopropylmalate, via the formation of 2-isopropylmaleate. In Serratia proteamaculans (strain 568), this protein is 3-isopropylmalate dehydratase small subunit.